A 464-amino-acid polypeptide reads, in one-letter code: MSDKKELLWQSRFSEPFDRDALRFSSSVHIDKALFREDIEGSIAHVTMLAEQDIISDAECADLVQGLREIEEELASGTLVPHWEDEDIHTVIENRLKEKIGQTAGKIHSGRSRNDQVATDTRLYLRKKIAELQDAVQAMQQMLIGKAETYKETIIFGYTHLQRAQPISAGHYYLAWFSMFRRDRERLRDLLRRVNISPLGAAAFAGSTLPLNPARTAELLAFDDIFSNSIDAVSDRDILIEFISACSIMMMHLSRFAEDLILWSSYEFGYLEISDAFATGSSLMPQKKNADIAELVRGKTGRVYGNLVSMLTIMKGLPLSYNRDMQEDKQPLFDTAETTISSMRIFTKLIGHTTLKVERLRSLTSEDLSLATEIAEYLVSRNLPFREAHRITGKIVTFSIGEGITLPRITLEQFRTFSPLFDSAIYDSLKPEASVNSKKSHGSCSFRSVEAQLAEARAQMQENR.

It belongs to the lyase 1 family. Argininosuccinate lyase subfamily.

The protein localises to the cytoplasm. The catalysed reaction is 2-(N(omega)-L-arginino)succinate = fumarate + L-arginine. The protein operates within amino-acid biosynthesis; L-arginine biosynthesis; L-arginine from L-ornithine and carbamoyl phosphate: step 3/3. In Chlorobium phaeobacteroides (strain DSM 266 / SMG 266 / 2430), this protein is Argininosuccinate lyase.